The sequence spans 1230 residues: ATP-dependent helicase/nuclease subunit A (1230 aa).

The UvrD-like helicase ATP-binding domain occupies 3–473 (TKFTKNQQRA…IDLADNFRSQ (471 aa)). Residue 24-31 (ASAGSGKT) participates in ATP binding. The UvrD-like helicase C-terminal domain maps to 500 to 782 (EAKLVPKAAY…RIMTIHASKG (283 aa)).

The protein belongs to the helicase family. AddA subfamily. Heterodimer of AddA and AddB/RexB. Mg(2+) is required as a cofactor.

It catalyses the reaction Couples ATP hydrolysis with the unwinding of duplex DNA by translocating in the 3'-5' direction.. The catalysed reaction is ATP + H2O = ADP + phosphate + H(+). Functionally, the heterodimer acts as both an ATP-dependent DNA helicase and an ATP-dependent, dual-direction single-stranded exonuclease. Recognizes the chi site generating a DNA molecule suitable for the initiation of homologous recombination. The AddA nuclease domain is required for chi fragment generation; this subunit has the helicase and 3' -&gt; 5' nuclease activities. The protein is ATP-dependent helicase/nuclease subunit A of Leuconostoc mesenteroides subsp. mesenteroides (strain ATCC 8293 / DSM 20343 / BCRC 11652 / CCM 1803 / JCM 6124 / NCDO 523 / NBRC 100496 / NCIMB 8023 / NCTC 12954 / NRRL B-1118 / 37Y).